Here is a 1103-residue protein sequence, read N- to C-terminus: Platelet-derived growth factor receptor beta (1103 aa).

Positions 1–31 (MQVPGTMPAPVLKGQALWLPLLLMLSPQASG) are cleaved as a signal peptide. Ig-like C2-type domains are found at residues 33-120 (LVIT…YIFV), 129-210 (PVDP…YSLQ), 214-309 (INVS…INVT), 331-403 (HRSR…HEDA), and 416-524 (PVRV…VTVV). Over 33 to 532 (LVITPPGPEL…VVPHSLPFKV (500 aa)) the chain is Extracellular. N-linked (GlcNAc...) asparagine glycans are attached at residues Asn-45 and Asn-89. Cystine bridges form between Cys-54–Cys-100 and Cys-149–Cys-190. N-linked (GlcNAc...) asparagine glycans are attached at residues Asn-215 and Asn-230. Cys-235 and Cys-291 are oxidised to a cystine. N-linked (GlcNAc...) asparagine glycans are attached at residues Asn-292, Asn-307, Asn-354, Asn-371, Asn-468, and Asn-479. A disulfide bridge connects residues Cys-436 and Cys-508. The chain crosses the membrane as a helical span at residues 533 to 553 (VVISAILALVVLTIISLIILI). Residues 554–1103 (MLWQKKPRYE…PRAEAEDSFL (550 aa)) are Cytoplasmic-facing. Residues Tyr-562, Tyr-579, and Tyr-581 each carry the phosphotyrosine; by autocatalysis modification. A Protein kinase domain is found at 600-962 (LVLGRTLGSG…QLVLLLERLL (363 aa)). Residues 606–614 (LGSGAFGQV) and Lys-634 each bind ATP. Residue Tyr-686 is modified to Phosphotyrosine; by ABL1 and ABL2. A phosphotyrosine; by autocatalysis mark is found at Tyr-716, Tyr-740, Tyr-751, Tyr-763, Tyr-771, Tyr-775, and Tyr-778. Asp-826 serves as the catalytic Proton acceptor. A Phosphotyrosine; by autocatalysis modification is found at Tyr-857. Residues Tyr-934 and Tyr-970 each carry the phosphotyrosine; by ABL1 and ABL2 modification. Phosphotyrosine; by autocatalysis is present on residues Tyr-1009 and Tyr-1021. Residues 1017 to 1103 (GDNDYIIPLP…PRAEAEDSFL (87 aa)) form a disordered region. Over residues 1039 to 1059 (SSPSLASSTLNEVNTSSTISC) the composition is skewed to polar residues. Positions 1065–1075 (PQEEPEPEPEP) are enriched in acidic residues. Over residues 1076–1086 (QPEPQVVPEPP) the composition is skewed to pro residues.

This sequence belongs to the protein kinase superfamily. Tyr protein kinase family. CSF-1/PDGF receptor subfamily. As to quaternary structure, interacts with homodimeric PDGFB and PDGFD, and with heterodimers formed by PDGFA and PDGFB. May also interact with homodimeric PDGFC. Monomer in the absence of bound ligand. Interaction with homodimeric PDGFB, heterodimers formed by PDGFA and PDGFB or homodimeric PDGFD, leads to receptor dimerization, where both PDGFRA homodimers and heterodimers with PDGFRB are observed. Interacts with SH2B2/APS. Interacts directly (tyrosine phosphorylated) with SHB. Interacts (tyrosine phosphorylated) with PIK3R1 and RASA1. Interacts (tyrosine phosphorylated) with CBL. Interacts (tyrosine phosphorylated) with SRC and SRC family kinases. Interacts (tyrosine phosphorylated) with PIK3C2B, maybe indirectly. Interacts (tyrosine phosphorylated) with SHC1, GRB7, GRB10 and NCK1. Interaction with GRB2 is mediated by SHC1. Interacts (via C-terminus) with NHERF1. In terms of processing, N-glycosylated. Ubiquitinated. After autophosphorylation, the receptor is polyubiquitinated, leading to its degradation. Post-translationally, autophosphorylated on tyrosine residues upon ligand binding. Autophosphorylation occurs in trans, i.e. one subunit of the dimeric receptor phosphorylates tyrosine residues on the other subunit. Phosphorylation at Tyr-579, and to a lesser degree, Tyr-581 is important for interaction with SRC. Phosphorylation at Tyr-716 is important for interaction with GRB2. Phosphorylation at Tyr-740 and Tyr-751 is important for interaction with PIK3R1. Phosphorylation at Tyr-751 is important for interaction with NCK1. Phosphorylation at Tyr-771 and Tyr-857 is important for interaction with RASA1/GAP. Phosphorylation at Tyr-857 is important for efficient phosphorylation of PLCG1 and PTPN11, resulting in increased phosphorylation of AKT1, MAPK1/ERK2 and/or MAPK3/ERK1, PDCD6IP/ALIX and STAM, and in increased cell proliferation. Phosphorylation at Tyr-1009 is important for interaction with PTPN11. Phosphorylation at Tyr-1009 and Tyr-1021 is important for interaction with PLCG1. Dephosphorylated by PTPRJ at Tyr-751, Tyr-857, Tyr-1009 and Tyr-1021. Dephosphorylated by PTPN2 at Tyr-579 and Tyr-1021.

It localises to the cell membrane. The protein resides in the cytoplasmic vesicle. The protein localises to the lysosome lumen. The enzyme catalyses L-tyrosyl-[protein] + ATP = O-phospho-L-tyrosyl-[protein] + ADP + H(+). Its activity is regulated as follows. Present in an inactive conformation in the absence of bound ligand. Binding of PDGFB and/or PDGFD leads to dimerization and activation by autophosphorylation on tyrosine residues. Its function is as follows. Tyrosine-protein kinase that acts as a cell-surface receptor for homodimeric PDGFB and PDGFD and for heterodimers formed by PDGFA and PDGFB, and plays an essential role in the regulation of embryonic development, cell proliferation, survival, differentiation, chemotaxis and migration. Plays an essential role in blood vessel development by promoting proliferation, migration and recruitment of pericytes and smooth muscle cells to endothelial cells. Plays a role in the migration of vascular smooth muscle cells and the formation of neointima at vascular injury sites. Required for normal development of the cardiovascular system. Required for normal recruitment of pericytes (mesangial cells) in the kidney glomerulus, and for normal formation of a branched network of capillaries in kidney glomeruli. Promotes rearrangement of the actin cytoskeleton and the formation of membrane ruffles. Binding of its cognate ligands - homodimeric PDGFB, heterodimers formed by PDGFA and PDGFB or homodimeric PDGFD -leads to the activation of several signaling cascades; the response depends on the nature of the bound ligand and is modulated by the formation of heterodimers between PDGFRA and PDGFRB. Phosphorylates PLCG1, PIK3R1, PTPN11, RASA1/GAP, CBL, SHC1 and NCK1. Activation of PLCG1 leads to the production of the cellular signaling molecules diacylglycerol and inositol 1,4,5-trisphosphate, mobilization of cytosolic Ca(2+) and the activation of protein kinase C. Phosphorylation of PIK3R1, the regulatory subunit of phosphatidylinositol 3-kinase, leads to the activation of the AKT1 signaling pathway. Phosphorylation of SHC1, or of the C-terminus of PTPN11, creates a binding site for GRB2, resulting in the activation of HRAS, RAF1 and down-stream MAP kinases, including MAPK1/ERK2 and/or MAPK3/ERK1. Promotes phosphorylation and activation of SRC family kinases. Promotes phosphorylation of PDCD6IP/ALIX and STAM. Receptor signaling is down-regulated by protein phosphatases that dephosphorylate the receptor and its down-stream effectors, and by rapid internalization of the activated receptor. The protein is Platelet-derived growth factor receptor beta (PDGFRB) of Canis lupus familiaris (Dog).